The following is a 666-amino-acid chain: DNA-directed RNA polymerase III subunit rpc3 (666 aa).

2 disordered regions span residues 130–153 (HEPH…VHSY) and 375–455 (SRLD…TESR). Residues 135 to 153 (NGNSNETNGATNGNGVHSY) show a composition bias toward polar residues. Positions 593-614 (TYKAMSRCLQRLDVEKRRKANI) are leucine-zipper.

The protein belongs to the RNA polymerase beta chain family. In terms of assembly, component of the RNA polymerase III (Pol III) complex consisting of 17 subunits.

It localises to the nucleus. Its function is as follows. DNA-dependent RNA polymerase catalyzes the transcription of DNA into RNA using the four ribonucleoside triphosphates as substrates. Specific core component of RNA polymerase III which synthesizes small RNAs, such as 5S rRNA and tRNAs. The protein is DNA-directed RNA polymerase III subunit rpc3 (rpc82) of Botryotinia fuckeliana (strain B05.10) (Noble rot fungus).